The sequence spans 454 residues: UPF0210 protein EUBREC_1565 (454 aa).

The protein belongs to the UPF0210 family. Homodimer.

This is UPF0210 protein EUBREC_1565 from Agathobacter rectalis (strain ATCC 33656 / DSM 3377 / JCM 17463 / KCTC 5835 / VPI 0990) (Eubacterium rectale).